Consider the following 297-residue polypeptide: Protease HtpX homolog (297 aa).

2 helical membrane passes run 5 to 25 (IFLF…VLTI) and 43 to 63 (LMAL…ISLG). Residue H154 participates in Zn(2+) binding. E155 is a catalytic residue. H158 provides a ligand contact to Zn(2+). 2 helical membrane-spanning segments follow: residues 169–189 (LLQG…AWVA) and 203–223 (FIAM…VVFA). E229 serves as a coordination point for Zn(2+).

This sequence belongs to the peptidase M48B family. It depends on Zn(2+) as a cofactor.

It is found in the cell membrane. The sequence is that of Protease HtpX homolog from Bacillus velezensis (strain DSM 23117 / BGSC 10A6 / LMG 26770 / FZB42) (Bacillus amyloliquefaciens subsp. plantarum).